The chain runs to 283 residues: tRNA pseudouridine synthase B (283 aa).

Asp38 acts as the Nucleophile in catalysis.

This sequence belongs to the pseudouridine synthase TruB family. Type 1 subfamily.

The catalysed reaction is uridine(55) in tRNA = pseudouridine(55) in tRNA. Functionally, responsible for synthesis of pseudouridine from uracil-55 in the psi GC loop of transfer RNAs. This Aster yellows witches'-broom phytoplasma (strain AYWB) protein is tRNA pseudouridine synthase B.